The sequence spans 130 residues: Small ribosomal subunit protein uS8 (130 aa).

Belongs to the universal ribosomal protein uS8 family. As to quaternary structure, part of the 30S ribosomal subunit. Contacts proteins S5 and S12.

In terms of biological role, one of the primary rRNA binding proteins, it binds directly to 16S rRNA central domain where it helps coordinate assembly of the platform of the 30S subunit. The sequence is that of Small ribosomal subunit protein uS8 from Actinobacillus succinogenes (strain ATCC 55618 / DSM 22257 / CCUG 43843 / 130Z).